A 423-amino-acid polypeptide reads, in one-letter code: tRNA(Ile)-lysidine synthase (423 aa).

Ser18–Ser23 contributes to the ATP binding site.

The protein belongs to the tRNA(Ile)-lysidine synthase family.

The protein localises to the cytoplasm. The enzyme catalyses cytidine(34) in tRNA(Ile2) + L-lysine + ATP = lysidine(34) in tRNA(Ile2) + AMP + diphosphate + H(+). Its function is as follows. Ligates lysine onto the cytidine present at position 34 of the AUA codon-specific tRNA(Ile) that contains the anticodon CAU, in an ATP-dependent manner. Cytidine is converted to lysidine, thus changing the amino acid specificity of the tRNA from methionine to isoleucine. The sequence is that of tRNA(Ile)-lysidine synthase from Aromatoleum aromaticum (strain DSM 19018 / LMG 30748 / EbN1) (Azoarcus sp. (strain EbN1)).